The primary structure comprises 728 residues: Catalase-peroxidase (728 aa).

Residues 1–26 form a disordered region; the sequence is MDNPTDTAGKCPVAHGNKPRGPSNRD. The segment at residues 96–218 is a cross-link (tryptophyl-tyrosyl-methioninium (Trp-Tyr) (with M-244)); that stretch reads WHSAGTYRIT…LGAVQMGLIY (123 aa). H97 acts as the Proton acceptor in catalysis. Residues 218–244 constitute a cross-link (tryptophyl-tyrosyl-methioninium (Tyr-Met) (with W-96)); the sequence is YVNPEGPNGNPDPVAAARDIRETFARM. H259 lines the heme b pocket.

It belongs to the peroxidase family. Peroxidase/catalase subfamily. In terms of assembly, homodimer or homotetramer. It depends on heme b as a cofactor. Formation of the three residue Trp-Tyr-Met cross-link is important for the catalase, but not the peroxidase activity of the enzyme.

It catalyses the reaction H2O2 + AH2 = A + 2 H2O. It carries out the reaction 2 H2O2 = O2 + 2 H2O. Functionally, bifunctional enzyme with both catalase and broad-spectrum peroxidase activity. Important for stationary phase survival. This is Catalase-peroxidase from Rhizobium etli (strain ATCC 51251 / DSM 11541 / JCM 21823 / NBRC 15573 / CFN 42).